Reading from the N-terminus, the 92-residue chain is Exodeoxyribonuclease 7 small subunit (92 aa).

Over residues 71–84 the composition is skewed to low complexity; sequence AESAGTAKSAVAAD. The segment at 71–92 is disordered; sequence AESAGTAKSAVAADSRGAADSA.

This sequence belongs to the XseB family. Heterooligomer composed of large and small subunits.

It is found in the cytoplasm. The catalysed reaction is Exonucleolytic cleavage in either 5'- to 3'- or 3'- to 5'-direction to yield nucleoside 5'-phosphates.. Functionally, bidirectionally degrades single-stranded DNA into large acid-insoluble oligonucleotides, which are then degraded further into small acid-soluble oligonucleotides. The sequence is that of Exodeoxyribonuclease 7 small subunit from Leifsonia xyli subsp. xyli (strain CTCB07).